Here is an 87-residue protein sequence, read N- to C-terminus: Small ribosomal subunit protein uS17 (87 aa).

Belongs to the universal ribosomal protein uS17 family. As to quaternary structure, part of the 30S ribosomal subunit.

In terms of biological role, one of the primary rRNA binding proteins, it binds specifically to the 5'-end of 16S ribosomal RNA. The sequence is that of Small ribosomal subunit protein uS17 from Chromobacterium violaceum (strain ATCC 12472 / DSM 30191 / JCM 1249 / CCUG 213 / NBRC 12614 / NCIMB 9131 / NCTC 9757 / MK).